A 283-amino-acid chain; its full sequence is S-methyl-5'-thioadenosine phosphorylase (283 aa).

Threonine 18 lines the phosphate pocket. At lysine 51 the chain carries N6-acetyllysine. Phosphate is bound by residues 60–61 (RH) and 93–94 (TA). Residue methionine 196 participates in substrate binding. Residue threonine 197 coordinates phosphate. Residue 220–222 (DYD) coordinates substrate.

This sequence belongs to the PNP/MTAP phosphorylase family. MTAP subfamily. In terms of assembly, homotrimer. Ubiquitously expressed.

Its subcellular location is the cytoplasm. The protein resides in the nucleus. The enzyme catalyses S-methyl-5'-thioadenosine + phosphate = 5-(methylsulfanyl)-alpha-D-ribose 1-phosphate + adenine. Its pathway is amino-acid biosynthesis; L-methionine biosynthesis via salvage pathway; S-methyl-5-thio-alpha-D-ribose 1-phosphate from S-methyl-5'-thioadenosine (phosphorylase route): step 1/1. Its activity is regulated as follows. Inhibited by 5'-methylthiotubercin and 5'-chloroformycin. In terms of biological role, catalyzes the reversible phosphorylation of S-methyl-5'-thioadenosine (MTA) to adenine and 5-methylthioribose-1-phosphate. Involved in the breakdown of MTA, a major by-product of polyamine biosynthesis. Responsible for the first step in the methionine salvage pathway after MTA has been generated from S-adenosylmethionine. Has broad substrate specificity with 6-aminopurine nucleosides as preferred substrates. The sequence is that of S-methyl-5'-thioadenosine phosphorylase from Homo sapiens (Human).